We begin with the raw amino-acid sequence, 586 residues long: Aspartate--tRNA ligase (586 aa).

Residue Glu171 participates in L-aspartate binding. Positions 195-198 are aspartate; the sequence is QLFK. L-aspartate is bound at residue Arg217. ATP-binding positions include 217-219 and Gln226; that span reads RDE. His448 lines the L-aspartate pocket. ATP is bound at residue Glu482. Arg489 provides a ligand contact to L-aspartate. ATP is bound at residue 534 to 537; it reads GLDR.

Belongs to the class-II aminoacyl-tRNA synthetase family. Type 1 subfamily. In terms of assembly, homodimer.

It localises to the cytoplasm. The enzyme catalyses tRNA(Asp) + L-aspartate + ATP = L-aspartyl-tRNA(Asp) + AMP + diphosphate. Functionally, catalyzes the attachment of L-aspartate to tRNA(Asp) in a two-step reaction: L-aspartate is first activated by ATP to form Asp-AMP and then transferred to the acceptor end of tRNA(Asp). The chain is Aspartate--tRNA ligase from Buchnera aphidicola subsp. Acyrthosiphon pisum (strain APS) (Acyrthosiphon pisum symbiotic bacterium).